Consider the following 258-residue polypeptide: MLAKRIIPCLDVRDGQVVKGVQFRNHEIIGDIVPLAKRYADEGADELVFYDITASSDGRVVDKSWVSRVAEVIDIPFCVAGGIRSIDDAAKILSFGADKISINSPALADPTLITRLADRFGVQCIVVGIDTWFDAETGKYHVNQYTGDESRTRVTQWETLDWVQEVQKRGAGEIVLNMMNQDGVRNGYDLEQLKKVRDVCHVPLIASGGAGTMEHFLEAFRDTDVDGALAASVFHKQIINIGELKAYLEAQGVEIRIC.

Active-site residues include aspartate 11 and aspartate 130.

It belongs to the HisA/HisF family. Heterodimer of HisH and HisF.

Its subcellular location is the cytoplasm. The enzyme catalyses 5-[(5-phospho-1-deoxy-D-ribulos-1-ylimino)methylamino]-1-(5-phospho-beta-D-ribosyl)imidazole-4-carboxamide + L-glutamine = D-erythro-1-(imidazol-4-yl)glycerol 3-phosphate + 5-amino-1-(5-phospho-beta-D-ribosyl)imidazole-4-carboxamide + L-glutamate + H(+). It participates in amino-acid biosynthesis; L-histidine biosynthesis; L-histidine from 5-phospho-alpha-D-ribose 1-diphosphate: step 5/9. Its function is as follows. IGPS catalyzes the conversion of PRFAR and glutamine to IGP, AICAR and glutamate. The HisF subunit catalyzes the cyclization activity that produces IGP and AICAR from PRFAR using the ammonia provided by the HisH subunit. In Citrobacter koseri (strain ATCC BAA-895 / CDC 4225-83 / SGSC4696), this protein is Imidazole glycerol phosphate synthase subunit HisF.